The primary structure comprises 478 residues: Cysteine--tRNA ligase (478 aa).

Zn(2+) is bound at residue Cys29. Positions 31–41 (ATVQSIPHIGH) match the 'HIGH' region motif. Residues Cys207, His232, and Glu236 each coordinate Zn(2+). Positions 263-267 (KMSKS) match the 'KMSKS' region motif. Lys266 is a binding site for ATP.

The protein belongs to the class-I aminoacyl-tRNA synthetase family. Monomer. Zn(2+) serves as cofactor.

It localises to the cytoplasm. It carries out the reaction tRNA(Cys) + L-cysteine + ATP = L-cysteinyl-tRNA(Cys) + AMP + diphosphate. This Corynebacterium jeikeium (strain K411) protein is Cysteine--tRNA ligase.